A 145-amino-acid chain; its full sequence is D-aminoacyl-tRNA deacylase (145 aa).

A Gly-cisPro motif, important for rejection of L-amino acids motif is present at residues 137-138; it reads GP.

It belongs to the DTD family. As to quaternary structure, homodimer.

It is found in the cytoplasm. It catalyses the reaction glycyl-tRNA(Ala) + H2O = tRNA(Ala) + glycine + H(+). The catalysed reaction is a D-aminoacyl-tRNA + H2O = a tRNA + a D-alpha-amino acid + H(+). In terms of biological role, an aminoacyl-tRNA editing enzyme that deacylates mischarged D-aminoacyl-tRNAs. Also deacylates mischarged glycyl-tRNA(Ala), protecting cells against glycine mischarging by AlaRS. Acts via tRNA-based rather than protein-based catalysis; rejects L-amino acids rather than detecting D-amino acids in the active site. By recycling D-aminoacyl-tRNA to D-amino acids and free tRNA molecules, this enzyme counteracts the toxicity associated with the formation of D-aminoacyl-tRNA entities in vivo and helps enforce protein L-homochirality. The polypeptide is D-aminoacyl-tRNA deacylase (Pseudomonas savastanoi pv. phaseolicola (strain 1448A / Race 6) (Pseudomonas syringae pv. phaseolicola (strain 1448A / Race 6))).